The following is a 1025-amino-acid chain: Multidrug resistance protein MdtC (1025 aa).

The next 12 helical transmembrane spans lie at 3 to 23 (FFAL…AITL), 333 to 353 (EVEQ…FLFL), 360 to 380 (IIPA…MYLC), 387 to 407 (LSLM…IVVL), 431 to 451 (VGFT…PLLL), 463 to 483 (FAVT…TLTP), 528 to 548 (LVGV…ISIP), 853 to 873 (VILI…LYES), 875 to 895 (VHPL…LLAL), 897 to 917 (LFNA…IGIV), 953 to 973 (PIMM…LSGG), and 984 to 1004 (ITIV…TPVV).

The protein belongs to the resistance-nodulation-cell division (RND) (TC 2.A.6) family. MdtC subfamily. Part of a tripartite efflux system composed of MdtA, MdtB and MdtC. MdtC forms a heteromultimer with MdtB.

The protein localises to the cell inner membrane. Functionally, the MdtABC tripartite complex confers resistance against novobiocin and deoxycholate. In Escherichia coli (strain SMS-3-5 / SECEC), this protein is Multidrug resistance protein MdtC.